We begin with the raw amino-acid sequence, 239 residues long: Heptaprenylglyceryl phosphate synthase (239 aa).

K12 is a binding site for sn-glycerol 1-phosphate. The Mg(2+) site is built by D14 and T40. Sn-glycerol 1-phosphate-binding positions include 159 to 164 (YLEYSG), G189, and 209 to 210 (GN).

This sequence belongs to the GGGP/HepGP synthase family. Group I subfamily. In terms of assembly, homodimer. The cofactor is Mg(2+).

It carries out the reaction sn-glycerol 1-phosphate + all-trans-heptaprenyl diphosphate = 3-heptaprenyl-sn-glycero-1-phosphate + diphosphate. It functions in the pathway membrane lipid metabolism; glycerophospholipid metabolism. In terms of biological role, prenyltransferase that catalyzes in vivo the transfer of the heptaprenyl moiety of heptaprenyl pyrophosphate (HepPP; 35 carbon atoms) to the C3 hydroxyl of sn-glycerol-1-phosphate (G1P), producing heptaprenylglyceryl phosphate (HepGP). This reaction is an ether-bond-formation step in the biosynthesis of archaea-type G1P-based membrane lipids found in Bacillales. To a much lesser extent, is also able to use geranylgeranyl diphosphate (GGPP; C20) as the prenyl donor. The protein is Heptaprenylglyceryl phosphate synthase of Geobacillus kaustophilus (strain HTA426).